Reading from the N-terminus, the 128-residue chain is uncharacterized protein (128 aa).

Residues lysine 2–methionine 127 enclose the VOC domain. Glutamate 48 and glutamate 123 together coordinate Ni(2+).

This sequence belongs to the glyoxalase I family.

This is an uncharacterized protein from Bacillus subtilis (strain 168).